A 542-amino-acid polypeptide reads, in one-letter code: CTP synthase (542 aa).

An amidoligase domain region spans residues 1 to 265; sequence MTRYVFITGG…DREVLGHFGL (265 aa). Ser-13 lines the CTP pocket. Ser-13 lines the UTP pocket. ATP contacts are provided by residues 14–19 and Asp-71; that span reads SLGKGL. Mg(2+) is bound by residues Asp-71 and Glu-139. Residues 146–148, 186–191, and Lys-222 each bind CTP; these read DIE and KTKPTQ. UTP is bound by residues 186–191 and Lys-222; that span reads KTKPTQ. A Glutamine amidotransferase type-1 domain is found at 291 to 541; the sequence is SIAIVGKYTG…VGAAIEQSRL (251 aa). An L-glutamine-binding site is contributed by Gly-353. Cys-380 serves as the catalytic Nucleophile; for glutamine hydrolysis. Residues 381-384, Glu-404, and Arg-469 each bind L-glutamine; that span reads FGMQ. Residues His-514 and Glu-516 contribute to the active site.

This sequence belongs to the CTP synthase family. In terms of assembly, homotetramer.

The enzyme catalyses UTP + L-glutamine + ATP + H2O = CTP + L-glutamate + ADP + phosphate + 2 H(+). The catalysed reaction is L-glutamine + H2O = L-glutamate + NH4(+). It catalyses the reaction UTP + NH4(+) + ATP = CTP + ADP + phosphate + 2 H(+). It functions in the pathway pyrimidine metabolism; CTP biosynthesis via de novo pathway; CTP from UDP: step 2/2. Allosterically activated by GTP, when glutamine is the substrate; GTP has no effect on the reaction when ammonia is the substrate. The allosteric effector GTP functions by stabilizing the protein conformation that binds the tetrahedral intermediate(s) formed during glutamine hydrolysis. Inhibited by the product CTP, via allosteric rather than competitive inhibition. Functionally, catalyzes the ATP-dependent amination of UTP to CTP with either L-glutamine or ammonia as the source of nitrogen. Regulates intracellular CTP levels through interactions with the four ribonucleotide triphosphates. The sequence is that of CTP synthase from Methylobacterium radiotolerans (strain ATCC 27329 / DSM 1819 / JCM 2831 / NBRC 15690 / NCIMB 10815 / 0-1).